We begin with the raw amino-acid sequence, 541 residues long: Arginine--tRNA ligase (541 aa).

Residues 123–133 (ANPTGFLHIGH) carry the 'HIGH' region motif.

This sequence belongs to the class-I aminoacyl-tRNA synthetase family. In terms of assembly, monomer.

It is found in the cytoplasm. The enzyme catalyses tRNA(Arg) + L-arginine + ATP = L-arginyl-tRNA(Arg) + AMP + diphosphate. The sequence is that of Arginine--tRNA ligase from Metamycoplasma arthritidis (strain 158L3-1) (Mycoplasma arthritidis).